A 761-amino-acid polypeptide reads, in one-letter code: MALARCVLAVILGALSVVARADPVSRSPLHRPHPSPPRSQHAHYLPSSRRPPRTPRFPLPLRIPAAQRPQVLSTGHTPPTIPRRCGAGESWGNATNLGVPCLHWDEVPPFLERSPPASWAELRGQPHNFCRSPDGSGRPWCFYRNAQGKVDWGYCDCGQGPALPVIRLVGGNSGHEGRVELYHAGQWGTICDDQWDNADADVICRQLGLSGIAKAWHQAHFGEGSGPILLDEVRCTGNELSIEQCPKSSWGEHNCGHKEDAGVSCVPLTDGVIRLAGGKSTHEGRLEVYYKGQWGTVCDDGWTEMNTYVACRLLGFKYGKQSSVNHFDGSNRPIWLDDVSCSGKEVSFIQCSRRQWGRHDCSHREDVGLTCYPDSDGHRLSPGFPIRLVDGENKKEGRVEVFVNGQWGTICDDGWTDKHAAVICRQLGYKGPARARTMAYFGEGKGPIHMDNVKCTGNEKALADCVKQDIGRHNCRHSEDAGVICDYLEKKASSSGNKEMLSSGCGLRLLHRRQKRIIGGNNSLRGAWPWQASLRLRSAHGDGRLLCGATLLSSCWVLTAAHCFKRYGNNSRSYAVRVGDYHTLVPEEFEQEIGVQQIVIHRNYRPDRSDYDIALVRLQGPGEQCARLSTHVLPACLPLWRERPQKTASNCHITGWGDTGRAYSRTLQQAAVPLLPKRFCKERYKGLFTGRMLCAGNLQEDNRVDSCQGDSGGPLMCEKPDESWVVYGVTSWGYGCGVKDTPGVYTRVPAFVPWIKSVTSL.

Positions 1 to 21 (MALARCVLAVILGALSVVARA) are cleaved as a signal peptide. Residues 25 to 87 (SRSPLHRPHP…PPTIPRRCGA (63 aa)) are disordered. The segment covering 38–48 (RSQHAHYLPSS) has biased composition (low complexity). Positions 85–157 (CGAGESWGNA…GKVDWGYCDC (73 aa)) constitute a Kringle domain. 17 disulfide bridges follow: Cys-85–Cys-157, Cys-101–Cys-141, Cys-130–Cys-155, Cys-191–Cys-255, Cys-204–Cys-265, Cys-235–Cys-245, Cys-298–Cys-361, Cys-311–Cys-371, Cys-341–Cys-351, Cys-411–Cys-475, Cys-424–Cys-485, Cys-455–Cys-465, Cys-505–Cys-636, Cys-547–Cys-563, Cys-651–Cys-717, Cys-680–Cys-694, and Cys-707–Cys-736. The N-linked (GlcNAc...) asparagine glycan is linked to Asn-93. SRCR domains lie at 166 to 267 (IRLV…SCVP), 273 to 373 (IRLA…TCYP), and 386 to 487 (IRLV…ICDY). Residues 505–516 (CGLRLLHRRQKR) are zymogen activation region. The Peptidase S1 domain occupies 517–760 (IIGGNNSLRG…FVPWIKSVTS (244 aa)). N-linked (GlcNAc...) asparagine glycosylation occurs at Asn-521. Residue His-562 is the Charge relay system of the active site. Asn-569 carries N-linked (GlcNAc...) asparagine glycosylation. Catalysis depends on Asp-612, which acts as the Charge relay system. Ser-711 (charge relay system) is an active-site residue.

The protein belongs to the peptidase S1 family. Most abundant in cerebral cortex, hippocampus and amygdala.

The protein localises to the secreted. Plays a role in neuronal plasticity and the proteolytic action may subserve structural reorganizations associated with learning and memory operations. The chain is Neurotrypsin (Prss12) from Mus musculus (Mouse).